The chain runs to 213 residues: Heat shock protein 27 (213 aa).

2 positions are modified to phosphoserine: S58 and S75. Positions 71-182 (SRRASGGPNA…SERIVQIQQT (112 aa)) constitute a sHSP domain. The segment at 157–213 (VLTLKAPPPPSKEQAKSERIVQIQQTGPAHLSVKAPAPEAGDGKAENGSGEKMETSK) is disordered. The segment covering 197–213 (GDGKAENGSGEKMETSK) has biased composition (basic and acidic residues).

This sequence belongs to the small heat shock protein (HSP20) family.

The sequence is that of Heat shock protein 27 (Hsp27) from Drosophila melanogaster (Fruit fly).